The sequence spans 856 residues: Structure-specific endonuclease subunit SLX4 (856 aa).

The segment covering 1 to 19 (MDNAAIASQSNTPPSNGRS) has biased composition (polar residues). Disordered regions lie at residues 1 to 24 (MDNA…ARFV), 38 to 65 (VIEP…SHKI), 88 to 121 (VDSP…HKMA), 139 to 202 (KTRK…DNEL), 296 to 326 (GIQT…KKPQ), 362 to 392 (KKMG…GNGP), 621 to 640 (SKSS…SQGD), 668 to 689 (RLAK…NEGP), and 715 to 742 (DSVG…QDCD). Residues 51 to 60 (STLLTSLSKS) show a composition bias toward low complexity. Basic residues predominate over residues 139-152 (KTRKKKAATAKRTR). The segment covering 296 to 309 (GIQTPTESRPATND) has biased composition (polar residues). A compositionally biased stretch (polar residues) spans 673–686 (SVKSQEPKSFSLSN).

It belongs to the SLX4 family. As to quaternary structure, forms a heterodimer with SLX1. Post-translationally, phosphorylated in response to DNA damage.

Its subcellular location is the nucleus. Regulatory subunit of the SLX1-SLX4 structure-specific endonuclease that resolves DNA secondary structures generated during DNA repair and recombination. Has endonuclease activity towards branched DNA substrates, introducing single-strand cuts in duplex DNA close to junctions with ss-DNA. This chain is Structure-specific endonuclease subunit SLX4, found in Blastomyces gilchristii (strain SLH14081) (Blastomyces dermatitidis).